Reading from the N-terminus, the 49-residue chain is Large ribosomal subunit protein bL33B (49 aa).

Belongs to the bacterial ribosomal protein bL33 family.

This chain is Large ribosomal subunit protein bL33B (rpmG2), found in Listeria innocua serovar 6a (strain ATCC BAA-680 / CLIP 11262).